The following is a 265-amino-acid chain: uncharacterized protein (265 aa).

Disordered stretches follow at residues 62 to 94 and 118 to 149; these read RNKKKEEKKGKGLMTARGGNRRDTETSQQALGK and MVPGSYIKDGPKKSDTDIKDAVDPESTQRPNP. Basic and acidic residues predominate over residues 126–139; the sequence is DGPKKSDTDIKDAV.

This is an uncharacterized protein from Homo sapiens (Human).